Reading from the N-terminus, the 63-residue chain is Cypmaclein (63 aa).

It belongs to the GASA family. Expressed in pollen (at protein level).

This is Cypmaclein from Cupressus sempervirens (Italian cypress).